Here is a 1133-residue protein sequence, read N- to C-terminus: MNELRMPNLVRPNRPLREPASRPLTPSRFPVPSQPDAAYTGSAAGSTGLGSPGPAIMDGSTSFGLVQPAPTAHFCHYCGQQGIFRCKGCKKTPYCSVDCQREDWKAHRHMCKSFDPETVGENMKESPDSDNVREDSLNIQRIYLKDLNATKYTKGAEIQGAVVEFNSPGRFFFLPEDPKVMEALMSITAEXQKXPSSTVGTPYVPCVGEVCSVQFSXDLNWYRGLIQTLAADQKTAHVLYIDYGNAENVPVERIKPLNIATKPYCPCAMECQXAGVVPIVDSWSTECCMTVRQLLGGKTLTIKLVDTLKNGRVHTVDIQLSIGKQLSTFLLEQGYAFAEAAAVGSAPAKKDPSALLEASMENFKRCCEGKDINEWAQPPEPLTLTIGDRFSVVVSHFQSPTDFIVQKVENAGVIQDLQLKLREHCSGVETQQDFRPAPGTVCCAQFSEDKQWYRAQVLAYSTEKSVCVGYIDFGNSEEVDLNHLRPISPALLALPKQAISCILAGVQPVEDSWSEECISTMLRMIANKTVNVEIQSAHKGKALVAIIEGEGYSEINVAELLISANYAAPADSNTLQQTEETTASAEPPASPPVCEPLVWSCVELPSDGQTVVLSTSAVTSPAEFYCCVGPTTDHQVLMELGVQLKQHCQSDSTYFVPKVGEPCCVKFSGDGKWYRAMVKELLGDVVKVNFVDFGHNMIVGKGCLRSITPKLLKLPFQAVRCWLAGVKPAGSEWSSEALLWFQNLVDGAQLLARVVSVSQQGYGVELESGGQSVAAALVSQQFAKPSGNLSKDPVRSPTTKQEDLRGGDQSQALTPASNDTQAVCEDGKSEEEPSEVATFSSAWKTAELPLNETFQPCVAAVINPTLFYLLHPIQNVDQQKLQEVMLELALHCSNYQSSSSVDTRPVPGAACCAQFSVDKIWYRAIILEVGEAEMSVVYADYGNSEKVPVSQILPIPTRLLQLPFKIIRCTLAGNEHFPVEWPPQVQQVFRSELLNVMATVQSFDGSANVLSLALPPERGGRNLAAVIQEMLHVHRKGSPLPDASQTPGSDATEPSCIKLGSTTASPDEPEDAAEPADAVTNTQESTPQEQKEMDQATSVHDLQGPGCCCQSLKKQMDRLEKMVQLLLSLQAEG.

The disordered stretch occupies residues Met1–Ala55. Positions Ala37–Ser46 are enriched in low complexity. Residues Cys75, Cys78, Cys86, Cys89, Cys95, Cys99, His107, and Cys111 each contribute to the Zn(2+) site. Residues Cys75–Cys111 form an MYND-type zinc finger. 3 Tudor domains span residues Val204 to Tyr264, Arg435 to Leu494, and Val656 to Leu714. Residues Ser786–Val836 form a disordered region. A compositionally biased stretch (polar residues) spans Asp808–Gln821. The 59-residue stretch at Arg904 to Leu962 folds into the Tudor 4 domain. The interval Lys1036 to Gly1104 is disordered. Residues Val1079–Gln1088 show a composition bias toward polar residues.

Belongs to the TDRD1 family. Interacts with MAEL. Interacts with PIWIL1, PIWIL2 and PIWIL4 (when methylated on arginine residues). In terms of tissue distribution, expressed in both the ovary and testis in the adult. Present in migrating primordial germ cells (PGCs) and also in the germ cells in both the gonadal primordia (stage 33), and in the developing ovary and testis.

Its subcellular location is the cytoplasm. Plays a central role during spermatogenesis by participating in the repression transposable elements and preventing their mobilization, which is essential for the germline integrity. Acts via the piRNA metabolic process, which mediates the repression of transposable elements during meiosis by forming complexes composed of piRNAs and Piwi proteins and governs the methylation and subsequent repression of transposons. Required for the localization of Piwi proteins to the meiotic nuage. Involved in the piRNA metabolic process by ensuring the entry of correct transcripts into the normal piRNA pool and limiting the entry of cellular transcripts into the piRNA pathway. May act by allowing the recruitment of piRNA biogenesis or loading factors that ensure the correct entry of transcripts and piRNAs into Piwi proteins. The sequence is that of Tudor domain-containing protein 1 (tdrd1) from Oryzias latipes (Japanese rice fish).